Reading from the N-terminus, the 205-residue chain is Probable nicotinate-nucleotide adenylyltransferase (205 aa).

This sequence belongs to the NadD family.

It catalyses the reaction nicotinate beta-D-ribonucleotide + ATP + H(+) = deamido-NAD(+) + diphosphate. Its pathway is cofactor biosynthesis; NAD(+) biosynthesis; deamido-NAD(+) from nicotinate D-ribonucleotide: step 1/1. Its function is as follows. Catalyzes the reversible adenylation of nicotinate mononucleotide (NaMN) to nicotinic acid adenine dinucleotide (NaAD). This chain is Probable nicotinate-nucleotide adenylyltransferase, found in Arthrobacter sp. (strain FB24).